The chain runs to 118 residues: Large ribosomal subunit protein uL24 (118 aa).

Belongs to the universal ribosomal protein uL24 family. As to quaternary structure, part of the 50S ribosomal subunit.

Its function is as follows. One of two assembly initiator proteins, it binds directly to the 5'-end of the 23S rRNA, where it nucleates assembly of the 50S subunit. One of the proteins that surrounds the polypeptide exit tunnel on the outside of the subunit. The chain is Large ribosomal subunit protein uL24 from Prochlorococcus marinus (strain SARG / CCMP1375 / SS120).